The following is a 738-amino-acid chain: DNA topoisomerase 4 subunit A (738 aa).

Residues 32–496 form the Topo IIA-type catalytic domain; sequence LPDVRDGLKP…SFEEVTLTNQ (465 aa). Tyr-120 serves as the catalytic O-(5'-phospho-DNA)-tyrosine intermediate.

The protein belongs to the type II topoisomerase GyrA/ParC subunit family. ParC type 1 subfamily. In terms of assembly, heterotetramer composed of ParC and ParE.

The protein resides in the cell membrane. It carries out the reaction ATP-dependent breakage, passage and rejoining of double-stranded DNA.. Functionally, topoisomerase IV is essential for chromosome segregation. It relaxes supercoiled DNA. Performs the decatenation events required during the replication of a circular DNA molecule. The sequence is that of DNA topoisomerase 4 subunit A from Rickettsia conorii (strain ATCC VR-613 / Malish 7).